The following is a 1729-amino-acid chain: MKVSTLRESSAMASPLPREMEEELVPTGSEPGDTRAKPPVKPKPRALPAKPALPAKPSLLVPVGPRPPRGPLAELPSARKMNMLAGPQPYGGSKRPLPFAPRPAVEASTGGEATQETGKEEAGKEEPPPLTPPARCAAPGGVRKAPAPFRPASERFAATTVEEILAKMEQPRKEVLASPDRLWGSRLTFNHDGSSRYGPRTYGTTTAPRDEDGSTLFRGWSQEGPVKSPAECREEHSKTPEERSLPSDLAFNGDLAKAASSELPADISKPWIPSSPAPSSENGGPASPGLPAEASGSGPGSPHLHPPDKSSPCHSQLLEAQTPEASQASPCPAVTPSAPSAALPDEGSRHTPSPGLPAEGAPEAPRPSSPPPEVLEPHSLDQPPATSPRPLIEVGELLDLTRTFPSGGEEEAKGDAHLRPTSLVQRRFSEGVLQSPSQDQEKLGGSLAALPQGQGSQLALDRPFGAESNWSLSQSFEWTFPTRPSGLGVWRLDSPPPSPITEASEAAEAAEAGNLAVSSREEGVSQQGQGAGSAPSGSGSSWVQGDDPSMSLTQKGDGESQPQFPAVPLEPLPTTEGTPGLPLQQAEERYESQEPLAGQESPLPLATREAALPILEPVLGQEQPAAPDQPCVLFADAPEPGQALPVEEEAVTLARAETTQARTEAQDLCRASPEPPGPESSSRWLDDLLASPPPSGGGARRGAGAELKDTQSPSTCSEGLLGWSQKDLQSEFGITGDPQPSSFSPSSWCQGASQDYGLGGASPRGDPGLGERDWTSKYGQGAGEGSTREWASRCGIGQEEMEASSSQDQSKVSAPGVLTAQDRVVGKPAQLGTQRSQEADVQDWEFRKRDSQGTYSSRDAELQDQEFGKRDSLGTYSSRDVSLGDWEFGKRDSLGAYASQDANEQGQDLGKRDHHGRYSSQDADEQDWEFQKRDVSLGTYGSRAAEPQEQEFGKSAWIRDYSSGGSSRTLDAQDRSFGTRPLSSGFSPEEAQQQDEEFEKKIPSVEDSLGEGSRDAGRPGERGSGGLFSPSTAHVPDGALGQRDQSSWQNSDASQEVGGHQERQQAGAQGPGSADLEDGEMGKRGWVGEFSLSVGPQREAAFSPGQQDWSRDFCIEASERSYQFGIIGNDRVSGAGFSPSSKMEGGHFVPPGKTTAGSVDWTDQLGLRNLEVSSCVGSGGSSEARESAVGQMGWSGGLSLRDMNLTGCLESGGSEEPGGIGVGEKDWTSDVNVKSKDLAEVGEGGGHSQARESGVGQTDWSGVEAGEFLKSRERGVGQADWTPDLGLRNMAPGAVCSPGESKELGVGQMDWGNNLGLRDLEVTCDPDSGGSQGLRGCGVGQMDWTQDLAPQNVELFGAPSEAREHGVGGVSQCPEPGLRHNGSLSPGLEARDPLEARELGVGETSGPETQGEDYSSSSLEPHPADPGMETGEALSFGASPGRCPARPPPSGSQGLLEEMLAASSSKAVARRESAASGLGGLLEEEGAGAGAAQEEVLEPGRDSPPSWRPQPDGEASQTEDVDGTWGSSAARWSDQGPAQTSRRPSQGPPARSPSQDFSFIEDTEILDSAMYRSRANLGRKRGHRAPVIRPGGTLGLSEAADSDAHLFQDSTEPRASRVPSSDEEVVEEPQSRRTRMSLGTKGLKVNLFPGLSPSALKAKLRPRNRSAEEGELAESKSSQKESAVQRSKSCKVPGLGKPLTLPPKPEKSSGSEGSSPNWLQALKLKKKKV.

Residues 1–12 (MKVSTLRESSAM) are compositionally biased toward polar residues. The interval 1–151 (MKVSTLRESS…VRKAPAPFRP (151 aa)) is disordered. Ser14 carries the phosphoserine modification. Residues 46-63 (ALPAKPALPAKPSLLVPV) are compositionally biased toward low complexity. The segment covering 117 to 127 (TGKEEAGKEEP) has biased composition (basic and acidic residues). Thr131 is modified (phosphothreonine). 3 positions are modified to phosphoserine: Ser178, Ser221, and Ser228. Disordered stretches follow at residues 184–450 (GSRL…LAAL), 484–603 (PSGL…ESPL), and 657–880 (ETTQ…SSRD). Residues 210–1572 (DEDGSTLFRG…TEILDSAMYR (1363 aa)) are acidic. Over residues 230 to 245 (AECREEHSKTPEERSL) the composition is skewed to basic and acidic residues. Thr239 carries the post-translational modification Phosphothreonine. 2 positions are modified to phosphoserine: Ser287 and Ser301. A compositionally biased stretch (low complexity) spans 352–363 (PSPGLPAEGAPE). Pro residues predominate over residues 364–374 (APRPSSPPPEV). 5 positions are modified to phosphoserine: Ser429, Ser435, Ser437, Ser494, and Ser498. 3 stretches are compositionally biased toward low complexity: residues 500–512 (ITEASEAAEAAEA), 524–541 (VSQQGQGAGSAPSGSGSS), and 572–583 (LPTTEGTPGLPL). Residue Thr501 is modified to Phosphothreonine. Phosphoserine occurs at positions 601, 672, 691, 695, 712, 724, 744, 762, and 806. The segment covering 738–753 (PQPSSFSPSSWCQGAS) has biased composition (polar residues). Over residues 803–812 (ASSSQDQSKV) the composition is skewed to polar residues. Thr833 bears the Phosphothreonine mark. Phosphoserine is present on residues Ser836, Ser851, Ser872, Ser877, Ser882, and Ser893. A compositionally biased stretch (basic and acidic residues) spans 858–872 (RDAELQDQEFGKRDS). Tyr897 carries the post-translational modification Phosphotyrosine. The tract at residues 897–1083 (YASQDANEQG…ADLEDGEMGK (187 aa)) is disordered. 4 positions are modified to phosphoserine: Ser899, Ser920, Ser936, and Ser976. At Thr979 the chain carries Phosphothreonine. Residues Ser983, Ser987, Ser1004, Ser1008, Ser1013, Ser1024, Ser1029, Ser1054, Ser1073, Ser1091, Ser1103, Ser1133, Ser1138, Ser1158, Ser1178, Ser1248, and Ser1253 each carry the phosphoserine modification. Basic and acidic residues predominate over residues 1012–1021 (GSRDAGRPGE). Residues 1043 to 1054 (RDQSSWQNSDAS) are compositionally biased toward polar residues. A disordered region spans residues 1240 to 1302 (EVGEGGGHSQ…GAVCSPGESK (63 aa)). At Thr1282 the chain carries Phosphothreonine. A phosphoserine mark is found at Ser1297, Ser1328, Ser1331, Ser1383, and Ser1385. Residues 1362 to 1561 (AREHGVGGVS…SPSQDFSFIE (200 aa)) form a disordered region. Residues 1389 to 1400 (EARDPLEARELG) are compositionally biased toward basic and acidic residues. Residues 1406 to 1419 (GPETQGEDYSSSSL) are compositionally biased toward polar residues. 8 positions are modified to phosphoserine: Ser1435, Ser1439, Ser1450, Ser1452, Ser1473, Ser1476, Ser1503, and Ser1506. The tract at residues 1450–1542 (SGSQGLLEEM…SDQGPAQTSR (93 aa)) is tankyrase-binding. Position 1518 is a phosphothreonine (Thr1518). A phosphoserine mark is found at Ser1533, Ser1545, and Ser1558. Thr1563 carries the post-translational modification Phosphothreonine. Positions 1575–1729 (ANLGRKRGHR…QALKLKKKKV (155 aa)) are disordered. A compositionally biased stretch (basic residues) spans 1577–1586 (LGRKRGHRAP). A compositionally biased stretch (basic and acidic residues) spans 1602–1615 (SDAHLFQDSTEPRA). Phosphoserine occurs at positions 1620, 1621, and 1631. The Nuclear localization signal signature appears at 1629 to 1635 (PQSRRTR). Lys1644 bears the N6-methyllysine mark. A phosphoserine mark is found at Ser1652, Ser1666, and Ser1715. Residues 1665-1679 (RSAEEGELAESKSSQ) are compositionally biased toward basic and acidic residues. The Nuclear localization signal signature appears at 1723 to 1729 (KLKKKKV).

In terms of assembly, binds to the ANK repeat domain of TNKS1 and TNKS2. In terms of processing, ADP-ribosylated by TNKS1 (in vitro). As to expression, detected in testis, ovary, lung, skeletal muscle, heart, prostate and pancreas, and at very low levels in brain and peripheral blood leukocytes.

It localises to the nucleus. It is found in the cytoplasm. The protein localises to the cytoskeleton. Its subcellular location is the chromosome. This is 182 kDa tankyrase-1-binding protein (TNKS1BP1) from Homo sapiens (Human).